An 894-amino-acid polypeptide reads, in one-letter code: Protein NLP9 (894 aa).

In terms of domain architecture, RWP-RK spans 517–603 (QEISGARRLE…LDSVQGVEGG (87 aa)). Residues 578–598 (RKINKVNRSLRKIQTVLDSVQ) adopt a coiled-coil conformation. Positions 732 to 763 (NTRIERGNGTVEPNHSISSSMSDSSNSSGAVL) are disordered. A compositionally biased stretch (low complexity) spans 747–763 (SISSSMSDSSNSSGAVL). The region spanning 792 to 875 (TLTVKATYRE…HTVKFLVRDI (84 aa)) is the PB1 domain.

The protein resides in the nucleus. Functionally, probable transcription factor. In Arabidopsis thaliana (Mouse-ear cress), this protein is Protein NLP9 (NLP9).